The sequence spans 333 residues: NADH-quinone oxidoreductase subunit H (333 aa).

8 helical membrane-spanning segments follow: residues 17-37 (VIQA…MSFI), 91-111 (VAMA…TLGV), 116-136 (IGLL…LFGG), 156-176 (ISYE…AGSF), 188-208 (MWFI…GVAV), 244-264 (YVNI…GWLA), 272-292 (FIPP…MFVL), and 310-330 (WKVC…VILM).

It belongs to the complex I subunit 1 family. As to quaternary structure, NDH-1 is composed of 14 different subunits. Subunits NuoA, H, J, K, L, M, N constitute the membrane sector of the complex.

The protein localises to the cell inner membrane. It carries out the reaction a quinone + NADH + 5 H(+)(in) = a quinol + NAD(+) + 4 H(+)(out). Its function is as follows. NDH-1 shuttles electrons from NADH, via FMN and iron-sulfur (Fe-S) centers, to quinones in the respiratory chain. The immediate electron acceptor for the enzyme in this species is believed to be ubiquinone. Couples the redox reaction to proton translocation (for every two electrons transferred, four hydrogen ions are translocated across the cytoplasmic membrane), and thus conserves the redox energy in a proton gradient. This subunit may bind ubiquinone. This Acinetobacter baylyi (strain ATCC 33305 / BD413 / ADP1) protein is NADH-quinone oxidoreductase subunit H.